A 196-amino-acid polypeptide reads, in one-letter code: Putative 3-methyladenine DNA glycosylase (196 aa).

Belongs to the DNA glycosylase MPG family.

This chain is Putative 3-methyladenine DNA glycosylase (yxlJ), found in Bacillus subtilis (strain 168).